Here is a 509-residue protein sequence, read N- to C-terminus: Bifunctional purine biosynthesis protein PurH (509 aa).

Residues 1–146 (MTIQKINRVL…KNWYRVGVCV (146 aa)) enclose the MGS-like domain.

It belongs to the PurH family.

It catalyses the reaction (6R)-10-formyltetrahydrofolate + 5-amino-1-(5-phospho-beta-D-ribosyl)imidazole-4-carboxamide = 5-formamido-1-(5-phospho-D-ribosyl)imidazole-4-carboxamide + (6S)-5,6,7,8-tetrahydrofolate. The catalysed reaction is IMP + H2O = 5-formamido-1-(5-phospho-D-ribosyl)imidazole-4-carboxamide. Its pathway is purine metabolism; IMP biosynthesis via de novo pathway; 5-formamido-1-(5-phospho-D-ribosyl)imidazole-4-carboxamide from 5-amino-1-(5-phospho-D-ribosyl)imidazole-4-carboxamide (10-formyl THF route): step 1/1. The protein operates within purine metabolism; IMP biosynthesis via de novo pathway; IMP from 5-formamido-1-(5-phospho-D-ribosyl)imidazole-4-carboxamide: step 1/1. The chain is Bifunctional purine biosynthesis protein PurH from Natranaerobius thermophilus (strain ATCC BAA-1301 / DSM 18059 / JW/NM-WN-LF).